Consider the following 637-residue polypeptide: Chaperone protein HtpG (637 aa).

An a; substrate-binding region spans residues 1 to 330 (MATAPASHAF…TEDLPLNISR (330 aa)). Residues 331–551 (ETLQENVVVR…GGASTSSMDR (221 aa)) form a b region. The tract at residues 552–637 (LLRVLHKDES…GDWYKAVRGL (86 aa)) is c.

Belongs to the heat shock protein 90 family. Homodimer.

It is found in the cytoplasm. Its function is as follows. Molecular chaperone. Has ATPase activity. This chain is Chaperone protein HtpG, found in Nitratidesulfovibrio vulgaris (strain ATCC 29579 / DSM 644 / CCUG 34227 / NCIMB 8303 / VKM B-1760 / Hildenborough) (Desulfovibrio vulgaris).